A 30-amino-acid chain; its full sequence is Platelet factor 4 (30 aa).

The protein belongs to the intercrine alpha (chemokine CxC) family. Homotetramer. Interacts with TNFAIP6 (via Link domain). Interacts with CCR1. Interacts with CXCR3. In terms of processing, binds non-covalently to a proteoglycan molecule.

It localises to the secreted. In terms of biological role, chemokine released during platelet aggregation that plays a role in different biological processes including hematopoiesis, cell proliferation, differentiation, and activation. Acts via different functional receptors including CCR1, CXCR3A or CXCR3B. Upon interaction with CXCR3A receptor, induces activated T-lymphocytes migration mediated via downstream Ras/extracellular signal-regulated kinase (ERK) signaling. Neutralizes the anticoagulant effect of heparin by binding more strongly to heparin than to the chondroitin-4-sulfate chains of the carrier molecule. Plays a role in the inhibition of hematopoiesis and in the maintenance of hematopoietic stem cell (HSC) quiescence. Chemotactic for neutrophils and monocytes via CCR1. Inhibits endothelial cell proliferation. In cooperation with toll-like receptor 8/TLR8, induces chromatin remodeling and activates inflammatory gene expression via the TBK1-IRF5 axis. In addition, induces myofibroblast differentiation and collagen synthesis in different precursor cells, including endothelial cells, by stimulating endothelial-to-mesenchymal transition. This is Platelet factor 4 (PF4) from Oryctolagus cuniculus (Rabbit).